Reading from the N-terminus, the 362-residue chain is Probable dual-specificity RNA methyltransferase RlmN (362 aa).

Glu105 (proton acceptor) is an active-site residue. One can recognise a Radical SAM core domain in the interval His111–Asp344. Cys118 and Cys349 are oxidised to a cystine. The [4Fe-4S] cluster site is built by Cys125, Cys129, and Cys132. S-adenosyl-L-methionine-binding positions include Gly175–Glu176, Ser207, Ser230–His232, and Asn306. Residue Cys349 is the S-methylcysteine intermediate of the active site.

The protein belongs to the radical SAM superfamily. RlmN family. [4Fe-4S] cluster is required as a cofactor.

The protein localises to the cytoplasm. The catalysed reaction is adenosine(2503) in 23S rRNA + 2 reduced [2Fe-2S]-[ferredoxin] + 2 S-adenosyl-L-methionine = 2-methyladenosine(2503) in 23S rRNA + 5'-deoxyadenosine + L-methionine + 2 oxidized [2Fe-2S]-[ferredoxin] + S-adenosyl-L-homocysteine. It catalyses the reaction adenosine(37) in tRNA + 2 reduced [2Fe-2S]-[ferredoxin] + 2 S-adenosyl-L-methionine = 2-methyladenosine(37) in tRNA + 5'-deoxyadenosine + L-methionine + 2 oxidized [2Fe-2S]-[ferredoxin] + S-adenosyl-L-homocysteine. In terms of biological role, specifically methylates position 2 of adenine 2503 in 23S rRNA and position 2 of adenine 37 in tRNAs. The sequence is that of Probable dual-specificity RNA methyltransferase RlmN from Bacillus cereus (strain ATCC 14579 / DSM 31 / CCUG 7414 / JCM 2152 / NBRC 15305 / NCIMB 9373 / NCTC 2599 / NRRL B-3711).